A 163-amino-acid polypeptide reads, in one-letter code: ECF RNA polymerase sigma factor SigM (163 aa).

A Polymerase core binding motif is present at residues 30–43 (DLLQETFMRAYIHI). A DNA-binding region (H-T-H motif) is located at residues 127–146 (YKEASHIMNISEANFKSVLF).

This sequence belongs to the sigma-70 factor family. ECF subfamily. In terms of assembly, interacts with the N-terminus of YhdL, which is probably its anti-sigma factor. Interacts transiently with the RNAP core.

Sigma factors are initiation factors that promote the attachment of RNA polymerase (RNAP) to specific initiation sites and are then released. Extracytoplasmic function (ECF) sigma factors are held in an inactive form by a cognate anti-sigma factor (YhdL) until released. This sigma factor is involved in the maintenance of membrane and cell wall integrity in response to environmental stresses including salt, acid, ethanol and antibiotics stress. Partially regulates transcription from a number of genes including disA. Associates with RNAP core under all growth phases. This is ECF RNA polymerase sigma factor SigM (sigM) from Bacillus subtilis (strain 168).